The sequence spans 134 residues: Small ribosomal subunit protein uS8c (134 aa).

The protein belongs to the universal ribosomal protein uS8 family. As to quaternary structure, part of the 30S ribosomal subunit.

The protein localises to the plastid. Its subcellular location is the chloroplast. Its function is as follows. One of the primary rRNA binding proteins, it binds directly to 16S rRNA central domain where it helps coordinate assembly of the platform of the 30S subunit. This is Small ribosomal subunit protein uS8c (rps8) from Gossypium barbadense (Sea Island cotton).